The chain runs to 406 residues: Tryptophan synthase beta chain (406 aa).

Residue lysine 99 is modified to N6-(pyridoxal phosphate)lysine.

Belongs to the TrpB family. Tetramer of two alpha and two beta chains. The cofactor is pyridoxal 5'-phosphate.

The enzyme catalyses (1S,2R)-1-C-(indol-3-yl)glycerol 3-phosphate + L-serine = D-glyceraldehyde 3-phosphate + L-tryptophan + H2O. It functions in the pathway amino-acid biosynthesis; L-tryptophan biosynthesis; L-tryptophan from chorismate: step 5/5. The beta subunit is responsible for the synthesis of L-tryptophan from indole and L-serine. This is Tryptophan synthase beta chain from Methylobacterium sp. (strain 4-46).